The following is a 469-amino-acid chain: Ribulose bisphosphate carboxylase large chain (469 aa).

Lys-8 is modified (N6,N6,N6-trimethyllysine). Residues Asn-117 and Thr-167 each contribute to the substrate site. The Proton acceptor role is filled by Lys-169. Lys-171 is a substrate binding site. Lys-195, Asp-197, and Glu-198 together coordinate Mg(2+). Lys-195 bears the N6-carboxylysine mark. The active-site Proton acceptor is the His-288. Substrate is bound by residues Arg-289, His-321, and Ser-373.

It belongs to the RuBisCO large chain family. Type I subfamily. As to quaternary structure, heterohexadecamer of 8 large chains and 8 small chains; disulfide-linked. The disulfide link is formed within the large subunit homodimers. Requires Mg(2+) as cofactor. Post-translationally, the disulfide bond which can form in the large chain dimeric partners within the hexadecamer appears to be associated with oxidative stress and protein turnover.

The protein localises to the plastid. It localises to the chloroplast. It catalyses the reaction 2 (2R)-3-phosphoglycerate + 2 H(+) = D-ribulose 1,5-bisphosphate + CO2 + H2O. The enzyme catalyses D-ribulose 1,5-bisphosphate + O2 = 2-phosphoglycolate + (2R)-3-phosphoglycerate + 2 H(+). In terms of biological role, ruBisCO catalyzes two reactions: the carboxylation of D-ribulose 1,5-bisphosphate, the primary event in carbon dioxide fixation, as well as the oxidative fragmentation of the pentose substrate in the photorespiration process. Both reactions occur simultaneously and in competition at the same active site. This chain is Ribulose bisphosphate carboxylase large chain, found in Akania bidwillii (Turnipwood).